Here is a 256-residue protein sequence, read N- to C-terminus: Phosphonates import ATP-binding protein PhnC (256 aa).

Residues 3-247 (LELKNISKTY…VLHKEIFTNV (245 aa)) form the ABC transporter domain. Residue 36–43 (GLSGAGKS) coordinates ATP.

Belongs to the ABC transporter superfamily. Phosphonates importer (TC 3.A.1.9.1) family. The complex is composed of two ATP-binding proteins (PhnC), two transmembrane proteins (PhnE) and a solute-binding protein (PhnD).

Its subcellular location is the cell inner membrane. The catalysed reaction is phosphonate(out) + ATP + H2O = phosphonate(in) + ADP + phosphate + H(+). Its function is as follows. Part of the ABC transporter complex PhnCDE involved in phosphonates import. Responsible for energy coupling to the transport system. This Treponema denticola (strain ATCC 35405 / DSM 14222 / CIP 103919 / JCM 8153 / KCTC 15104) protein is Phosphonates import ATP-binding protein PhnC.